A 90-amino-acid polypeptide reads, in one-letter code: Large ribosomal subunit protein bL27 (90 aa).

The tract at residues 1 to 21 (MAHKKAGGSSRNGRDSQAKRL) is disordered.

Belongs to the bacterial ribosomal protein bL27 family.

In Laribacter hongkongensis (strain HLHK9), this protein is Large ribosomal subunit protein bL27.